A 313-amino-acid polypeptide reads, in one-letter code: Maintenance of mitochondrial morphology protein 1 (313 aa).

At 1–12 (MIHLPQGSFTQG) the chain is on the lumenal side. The helical transmembrane segment at 13–33 (LIVGQLLTLAIIYVFLRFFLF) threads the bilayer. Residues 34–313 (CSPIPKSVAN…APQEESSNED (280 aa)) lie on the Cytoplasmic side of the membrane. Residues 42–63 (ANSPKQTGNETPDETPSTPLSN) show a composition bias toward polar residues. Residues 42-65 (ANSPKQTGNETPDETPSTPLSNNK) are disordered. An SMP-LTD domain is found at 90-288 (EPESLDWFNV…SPQFQQIAIP (199 aa)).

The protein belongs to the MMM1 family. Homodimer. Component of the ER-mitochondria encounter structure (ERMES) or MDM complex, composed of mmm1, mdm10, mdm12 and mdm34. A mmm1 homodimer associates with one molecule of mdm12 on each side in a pairwise head-to-tail manner, and the SMP-LTD domains of mmm1 and mdm12 generate a continuous hydrophobic tunnel for phospholipid trafficking.

Its subcellular location is the endoplasmic reticulum membrane. Functionally, component of the ERMES/MDM complex, which serves as a molecular tether to connect the endoplasmic reticulum (ER) and mitochondria. Components of this complex are involved in the control of mitochondrial shape and protein biogenesis, and function in nonvesicular lipid trafficking between the ER and mitochondria. The mdm12-mmm1 subcomplex functions in the major beta-barrel assembly pathway that is responsible for biogenesis of all outer membrane beta-barrel proteins, and acts in a late step after the SAM complex. The mdm10-mdm12-mmm1 subcomplex further acts in the TOM40-specific pathway after the action of the mdm12-mmm1 complex. Essential for establishing and maintaining the structure of mitochondria and maintenance of mtDNA nucleoids. In Schizosaccharomyces pombe (strain 972 / ATCC 24843) (Fission yeast), this protein is Maintenance of mitochondrial morphology protein 1.